Consider the following 429-residue polypeptide: Glycine betaine monooxygenase oxygenase subunit (429 aa).

A Rieske domain is found at 56–163 (WLIAGMTCEI…VKTAGGYIFI (108 aa)). Residues Cys98, His100, Cys118, and His121 each contribute to the [2Fe-2S] cluster site. Fe cation is bound by residues His217 and His222.

It belongs to the bacterial ring-hydroxylating dioxygenase alpha subunit family. The system is composed of an oxygenase subunit (GbcA) and a reductase subunit (GbcB). It depends on [2Fe-2S] cluster as a cofactor. Requires Fe cation as cofactor.

It catalyses the reaction glycine betaine + NADH + O2 + H(+) = N,N-dimethylglycine + formaldehyde + NAD(+) + H2O. Functionally, involved in degradation of glycine betaine. Part of a Rieske-type oxygenase system that catalyzes the conversion of glycine betaine (GB) to dimethylglycine (DMG). This subunit is the terminal oxygenase component of the system. Required for growth on choline and GB, but not for growth on DMG. The chain is Glycine betaine monooxygenase oxygenase subunit from Pseudomonas aeruginosa (strain ATCC 15692 / DSM 22644 / CIP 104116 / JCM 14847 / LMG 12228 / 1C / PRS 101 / PAO1).